Reading from the N-terminus, the 469-residue chain is Equisetin cluster transcription factor eqxR (469 aa).

The zn(2)-C6 fungal-type DNA-binding region spans 13-47 (CDRCRSHKLKCTVAPENSRSGSNRCTRCIRAQVTC). Residues 58–84 (STNVKKADIKSGTNSQETTSMQASTIV) are disordered. Positions 68–82 (SGTNSQETTSMQAST) are enriched in polar residues.

It is found in the nucleus. In terms of biological role, transcription factor that regulates the expression of the gene cluster that mediates the biosynthesis of Equisetin. The protein is Equisetin cluster transcription factor eqxR of Fusarium heterosporum.